Consider the following 117-residue polypeptide: Large ribosomal subunit protein bL20c (117 aa).

It belongs to the bacterial ribosomal protein bL20 family.

The protein resides in the plastid. It is found in the chloroplast. Its function is as follows. Binds directly to 23S ribosomal RNA and is necessary for the in vitro assembly process of the 50S ribosomal subunit. It is not involved in the protein synthesizing functions of that subunit. The chain is Large ribosomal subunit protein bL20c from Acorus calamus (Sweet flag).